Here is a 203-residue protein sequence, read N- to C-terminus: Orotate phosphoribosyltransferase (203 aa).

5-phospho-alpha-D-ribose 1-diphosphate is bound by residues Arg94, Lys95, Lys98, His100, and 119–127 (DDVATTGGS). Thr123 and Arg151 together coordinate orotate.

This sequence belongs to the purine/pyrimidine phosphoribosyltransferase family. PyrE subfamily. Homodimer. It depends on Mg(2+) as a cofactor.

It catalyses the reaction orotidine 5'-phosphate + diphosphate = orotate + 5-phospho-alpha-D-ribose 1-diphosphate. It participates in pyrimidine metabolism; UMP biosynthesis via de novo pathway; UMP from orotate: step 1/2. Its function is as follows. Catalyzes the transfer of a ribosyl phosphate group from 5-phosphoribose 1-diphosphate to orotate, leading to the formation of orotidine monophosphate (OMP). The protein is Orotate phosphoribosyltransferase of Staphylothermus marinus (strain ATCC 43588 / DSM 3639 / JCM 9404 / F1).